An 88-amino-acid polypeptide reads, in one-letter code: Cell division topological specificity factor (88 aa).

Belongs to the MinE family.

Functionally, prevents the cell division inhibition by proteins MinC and MinD at internal division sites while permitting inhibition at polar sites. This ensures cell division at the proper site by restricting the formation of a division septum at the midpoint of the long axis of the cell. This is Cell division topological specificity factor from Clostridium novyi (strain NT).